A 68-amino-acid chain; its full sequence is Large ribosomal subunit protein uL30 (68 aa).

Belongs to the universal ribosomal protein uL30 family. As to quaternary structure, part of the 50S ribosomal subunit.

This chain is Large ribosomal subunit protein uL30, found in Agrobacterium fabrum (strain C58 / ATCC 33970) (Agrobacterium tumefaciens (strain C58)).